The chain runs to 254 residues: Triosephosphate isomerase (254 aa).

9 to 11 is a binding site for substrate; it reads NWK. Histidine 96 functions as the Electrophile in the catalytic mechanism. The active-site Proton acceptor is the glutamate 169. Substrate is bound by residues glycine 175, serine 215, and 236–237; that span reads GG.

It belongs to the triosephosphate isomerase family. Homodimer.

The protein localises to the cytoplasm. The catalysed reaction is D-glyceraldehyde 3-phosphate = dihydroxyacetone phosphate. The protein operates within carbohydrate biosynthesis; gluconeogenesis. It participates in carbohydrate degradation; glycolysis; D-glyceraldehyde 3-phosphate from glycerone phosphate: step 1/1. Functionally, involved in the gluconeogenesis. Catalyzes stereospecifically the conversion of dihydroxyacetone phosphate (DHAP) to D-glyceraldehyde-3-phosphate (G3P). This is Triosephosphate isomerase from Borrelia recurrentis (strain A1).